The following is a 364-amino-acid chain: Long-wave-sensitive opsin 1 (364 aa).

Residues 1–52 (MAHAWGPQRLAGGQPQANFEESTQGSIFTYTNSNSTRDPFEGPNYHIAPRWV) lie on the Extracellular side of the membrane. O-linked (GlcNAc) serine glycosylation occurs at S22. N34 is a glycosylation site (N-linked (GlcNAc...) asparagine). The chain crosses the membrane as a helical span at residues 53–77 (YHLTSAWMVFVVIASVFTNGLVLAA). Topologically, residues 78-89 (TMRFKKLRHPLN) are cytoplasmic. The helical transmembrane segment at 90–115 (WILVNLAIADLAETIIASTISVVNQM) threads the bilayer. Residues 116 to 129 (YGYFVLGHPLCVVE) are Extracellular-facing. Residues C126 and C203 are joined by a disulfide bond. A helical membrane pass occupies residues 130–149 (GYTVSLCGITGLWSLAIISW). Over 150 to 168 (ERWMVVCKPFGNVRFDAKL) the chain is Cytoplasmic. Residues 169–192 (AITGIAFSWIWAAVWTAPPIFGWS) form a helical membrane-spanning segment. Topologically, residues 193–218 (RYWPHGLKTSCGPDVFSGSSYPGVQS) are extracellular. Residues 219–246 (YMIVLMITCCFIPLSVIILCYLQVWLAI) form a helical membrane-spanning segment. Residues 247-268 (RAVAKQQKESESTQKAEKEVTR) are Cytoplasmic-facing. The chain crosses the membrane as a helical span at residues 269 to 292 (MVMVMIFAYCLCWGPYTFFACFAA). The Extracellular portion of the chain corresponds to 293-300 (AHPGYAFH). The chain crosses the membrane as a helical span at residues 301–325 (PLVAALPAYFAKSATIYNPIIYVFM). An N6-(retinylidene)lysine modification is found at K312. The Cytoplasmic segment spans residues 326 to 364 (NRQFRNCILQLFGKKVDDSSELSSVSKTEASSVSSVSPA).

Belongs to the G-protein coupled receptor 1 family. Opsin subfamily. Phosphorylated on some or all of the serine and threonine residues present in the C-terminal region. In terms of tissue distribution, expressed in retina (at protein level). Expressed in cone and/or rod photoreceptor cells (at protein level).

Its subcellular location is the membrane. In terms of biological role, visual pigments are the light-absorbing molecules that mediate vision. They consist of an apoprotein, opsin, covalently linked to cis-retinal. This is Long-wave-sensitive opsin 1 (OPN1LW) from Bos taurus (Bovine).